The following is a 357-amino-acid chain: MTAQTGQTQSQDARIIISVDAMGGDEGPAAVIAGCDVSARKNPDVFFILHGPEAEITALVNRRKSLQGRCEVRDATGVVTMDDKPSQVVRNSKGTSMWSAIEAVRDGSASVAVSCGNTGALMALSMIRLRKLPGVNRPAIAVLYPSSNQQGFNVLLDVGADIKADADDLLRYALMGMSYARNGLDLPRPRVGLLNVGTEEHKGRTELKEAFDLIKEQQEPAGFDFVGFVEGGDISGDLCDVIVTDGFTGNVAIKTGEGTANLVGNRLREAFRYTPLSRLASLLAYPSLRRLKKKIDPRRVNGGVFLGLNGTVVKSHGAADATGVSSAIKLAAQLAHIQFTDKLAARVAGLPAEEKTQ.

The protein belongs to the PlsX family. In terms of assembly, homodimer. Probably interacts with PlsY.

Its subcellular location is the cytoplasm. The catalysed reaction is a fatty acyl-[ACP] + phosphate = an acyl phosphate + holo-[ACP]. It functions in the pathway lipid metabolism; phospholipid metabolism. Functionally, catalyzes the reversible formation of acyl-phosphate (acyl-PO(4)) from acyl-[acyl-carrier-protein] (acyl-ACP). This enzyme utilizes acyl-ACP as fatty acyl donor, but not acyl-CoA. The chain is Phosphate acyltransferase from Roseobacter denitrificans (strain ATCC 33942 / OCh 114) (Erythrobacter sp. (strain OCh 114)).